Reading from the N-terminus, the 124-residue chain is Large ribosomal subunit protein bL12 (124 aa).

This sequence belongs to the bacterial ribosomal protein bL12 family. Homodimer. Part of the ribosomal stalk of the 50S ribosomal subunit. Forms a multimeric L10(L12)X complex, where L10 forms an elongated spine to which 2 to 4 L12 dimers bind in a sequential fashion. Binds GTP-bound translation factors.

Forms part of the ribosomal stalk which helps the ribosome interact with GTP-bound translation factors. Is thus essential for accurate translation. The sequence is that of Large ribosomal subunit protein bL12 from Desulfitobacterium hafniense (strain DSM 10664 / DCB-2).